Here is a 501-residue protein sequence, read N- to C-terminus: Aldehyde dehydrogenase, cytosolic 1 (501 aa).

Residue 246 to 251 (GSTEVG) participates in NAD(+) binding. The active-site Proton acceptor is the Glu269. The active-site Nucleophile is Cys303.

The protein belongs to the aldehyde dehydrogenase family. In terms of assembly, homotetramer. As to expression, eye specific, with very high expression in the lens.

The protein resides in the cytoplasm. The catalysed reaction is an aldehyde + NAD(+) + H2O = a carboxylate + NADH + 2 H(+). Its pathway is alcohol metabolism; ethanol degradation; acetate from ethanol: step 2/2. Major component of the eye of elephant shrews, which in contrast to other mammals, possesses both a lens- and a non-lens class-1 aldehyde dehydrogenase 1. This eye-specific form is a structural protein of the lens and, in other part of the eye, serves as the major form of ALDH1. Can convert/oxidize retinaldehyde to retinoic acid. The protein is Aldehyde dehydrogenase, cytosolic 1 (ALDH1) of Elephantulus edwardii (Cape long-eared elephant shrew).